Reading from the N-terminus, the 394-residue chain is Galactose-3-O-sulfotransferase 2 (394 aa).

The Cytoplasmic portion of the chain corresponds to Met1–Ser8. Residues Phe9–Val29 traverse the membrane as a helical; Signal-anchor for type II membrane protein segment. Residues Asp30–Lys394 are Lumenal-facing. N-linked (GlcNAc...) asparagine glycosylation is found at Asn72, Asn176, Asn284, and Asn326.

Belongs to the galactose-3-O-sulfotransferase family.

The protein localises to the golgi apparatus. The protein resides in the golgi stack membrane. It participates in protein modification; carbohydrate sulfation. With respect to regulation, strongly inhibited by Cu(2+) and Zn(2+). Functionally, transfers a sulfate group to the hydroxyl group at C3 of non-reducing beta-galactosyl residues. Acts both on type 1 (Gal-beta-1,3-GlcNAc) and type 2 (Gal-beta-1,4-GlcNAc) chains with similar efficiency. The polypeptide is Galactose-3-O-sulfotransferase 2 (Gal3st2) (Mus musculus (Mouse)).